A 142-amino-acid polypeptide reads, in one-letter code: MVLSAADKGNVKAAWGKVGDHAAEYGAEALERMFLSFPTTKTYFPHFDLSHGSAQVKGHGAKVAAALTKAVGHLDDLPGALSELSDLHAHKLRVDPVNFKLLSHSLLVTLASHLPNDFTPAVHASLDKFLANVSTVLTSKYR.

In terms of domain architecture, Globin spans 2–142; that stretch reads VLSAADKGNV…VSTVLTSKYR (141 aa). At serine 4 the chain carries Phosphoserine. 2 positions are modified to N6-succinyllysine: lysine 8 and lysine 12. Lysine 17 is subject to N6-acetyllysine; alternate. Position 17 is an N6-succinyllysine; alternate (lysine 17). A Phosphotyrosine modification is found at tyrosine 25. Serine 36 bears the Phosphoserine mark. At lysine 41 the chain carries N6-succinyllysine. A Phosphoserine modification is found at serine 50. Residue histidine 59 coordinates O2. Histidine 88 lines the heme b pocket. Serine 103 is subject to Phosphoserine. Phosphothreonine is present on threonine 109. Serine 125 is subject to Phosphoserine. Threonine 135 and threonine 138 each carry phosphothreonine. The residue at position 139 (serine 139) is a Phosphoserine.

It belongs to the globin family. As to quaternary structure, heterotetramer of two alpha chains and two beta chains. As to expression, red blood cells.

Functionally, involved in oxygen transport from the lung to the various peripheral tissues. Its function is as follows. Hemopressin acts as an antagonist peptide of the cannabinoid receptor CNR1. Hemopressin-binding efficiently blocks cannabinoid receptor CNR1 and subsequent signaling. This is Hemoglobin subunit alpha (HBA) from Bos gaurus frontalis (Domestic gayal).